A 118-amino-acid polypeptide reads, in one-letter code: Small ribosomal subunit protein uS13 (118 aa).

Residues 93–118 (KGLPVRGQRTKTNARTRKGPRKPIRK) form a disordered region.

The protein belongs to the universal ribosomal protein uS13 family. As to quaternary structure, part of the 30S ribosomal subunit. Forms a loose heterodimer with protein S19. Forms two bridges to the 50S subunit in the 70S ribosome.

Functionally, located at the top of the head of the 30S subunit, it contacts several helices of the 16S rRNA. In the 70S ribosome it contacts the 23S rRNA (bridge B1a) and protein L5 of the 50S subunit (bridge B1b), connecting the 2 subunits; these bridges are implicated in subunit movement. Contacts the tRNAs in the A and P-sites. This chain is Small ribosomal subunit protein uS13, found in Ectopseudomonas mendocina (strain ymp) (Pseudomonas mendocina).